A 509-amino-acid chain; its full sequence is Probable cytochrome P450 4ac3 (509 aa).

Cysteine 454 contacts heme.

This sequence belongs to the cytochrome P450 family. Heme serves as cofactor.

It localises to the endoplasmic reticulum membrane. The protein resides in the microsome membrane. Its function is as follows. May be involved in the metabolism of insect hormones and in the breakdown of synthetic insecticides. This is Probable cytochrome P450 4ac3 (Cyp4ac3) from Drosophila melanogaster (Fruit fly).